Consider the following 379-residue polypeptide: Alcohol dehydrogenase class-3 (379 aa).

7 residues coordinate Zn(2+): C47, H69, C99, C102, C105, C113, and C176.

It belongs to the zinc-containing alcohol dehydrogenase family. Class-III subfamily. Homodimer. Zn(2+) serves as cofactor.

The protein localises to the cytoplasm. The enzyme catalyses a primary alcohol + NAD(+) = an aldehyde + NADH + H(+). It catalyses the reaction a secondary alcohol + NAD(+) = a ketone + NADH + H(+). The catalysed reaction is S-(hydroxymethyl)glutathione + NADP(+) = S-formylglutathione + NADPH + H(+). It carries out the reaction S-(hydroxymethyl)glutathione + NAD(+) = S-formylglutathione + NADH + H(+). Class-III ADH is remarkably ineffective in oxidizing ethanol, but it readily catalyzes the oxidation of long-chain primary alcohols and the oxidation of S-(hydroxymethyl) glutathione. In Dictyostelium discoideum (Social amoeba), this protein is Alcohol dehydrogenase class-3 (adh5).